The chain runs to 486 residues: Malonate-semialdehyde dehydrogenase (486 aa).

NAD(+)-binding residues include phenylalanine 154, lysine 178, glutamate 181, arginine 182, and serine 231. Residue cysteine 286 is the Nucleophile of the active site. Residue glutamate 386 coordinates NAD(+).

The protein belongs to the aldehyde dehydrogenase family. IolA subfamily. As to quaternary structure, homotetramer.

It carries out the reaction 3-oxopropanoate + NAD(+) + CoA + H2O = hydrogencarbonate + acetyl-CoA + NADH + H(+). The catalysed reaction is 2-methyl-3-oxopropanoate + NAD(+) + CoA + H2O = propanoyl-CoA + hydrogencarbonate + NADH + H(+). The protein operates within polyol metabolism; myo-inositol degradation into acetyl-CoA; acetyl-CoA from myo-inositol: step 7/7. Its function is as follows. Catalyzes the oxidation of malonate semialdehyde (MSA) and methylmalonate semialdehyde (MMSA) into acetyl-CoA and propanoyl-CoA, respectively. Is involved in a myo-inositol catabolic pathway. Bicarbonate, and not CO2, is the end-product of the enzymatic reaction. The chain is Malonate-semialdehyde dehydrogenase from Bacillus cereus (strain AH187).